The chain runs to 595 residues: Aspartate--tRNA(Asp/Asn) ligase (595 aa).

L-aspartate is bound at residue E174. An aspartate region spans residues 198 to 201 (QLFK). R220 is a binding site for L-aspartate. Residues 220-222 (RDE) and Q229 each bind ATP. H452 is an L-aspartate binding site. An ATP-binding site is contributed by E486. Residue R493 coordinates L-aspartate. ATP is bound at residue 538–541 (GLDR).

Belongs to the class-II aminoacyl-tRNA synthetase family. Type 1 subfamily. In terms of assembly, homodimer.

The protein localises to the cytoplasm. It catalyses the reaction tRNA(Asx) + L-aspartate + ATP = L-aspartyl-tRNA(Asx) + AMP + diphosphate. In terms of biological role, aspartyl-tRNA synthetase with relaxed tRNA specificity since it is able to aspartylate not only its cognate tRNA(Asp) but also tRNA(Asn). Reaction proceeds in two steps: L-aspartate is first activated by ATP to form Asp-AMP and then transferred to the acceptor end of tRNA(Asp/Asn). The chain is Aspartate--tRNA(Asp/Asn) ligase from Nitrosococcus oceani (strain ATCC 19707 / BCRC 17464 / JCM 30415 / NCIMB 11848 / C-107).